Consider the following 289-residue polypeptide: 4-diphosphocytidyl-2-C-methyl-D-erythritol kinase (289 aa).

Lys16 is an active-site residue. An ATP-binding site is contributed by 99 to 109 (PMGGGIGGGSS). Asp141 is a catalytic residue.

The protein belongs to the GHMP kinase family. IspE subfamily.

The catalysed reaction is 4-CDP-2-C-methyl-D-erythritol + ATP = 4-CDP-2-C-methyl-D-erythritol 2-phosphate + ADP + H(+). The protein operates within isoprenoid biosynthesis; isopentenyl diphosphate biosynthesis via DXP pathway; isopentenyl diphosphate from 1-deoxy-D-xylulose 5-phosphate: step 3/6. Functionally, catalyzes the phosphorylation of the position 2 hydroxy group of 4-diphosphocytidyl-2C-methyl-D-erythritol. This chain is 4-diphosphocytidyl-2-C-methyl-D-erythritol kinase, found in Ralstonia nicotianae (strain ATCC BAA-1114 / GMI1000) (Ralstonia solanacearum).